The chain runs to 310 residues: Ribosomal RNA small subunit methyltransferase H (310 aa).

S-adenosyl-L-methionine is bound by residues 32-34, Asp-52, Phe-79, Asp-100, and Gln-107; that span reads AGH.

This sequence belongs to the methyltransferase superfamily. RsmH family.

The protein resides in the cytoplasm. It carries out the reaction cytidine(1402) in 16S rRNA + S-adenosyl-L-methionine = N(4)-methylcytidine(1402) in 16S rRNA + S-adenosyl-L-homocysteine + H(+). Specifically methylates the N4 position of cytidine in position 1402 (C1402) of 16S rRNA. The protein is Ribosomal RNA small subunit methyltransferase H of Bacillus pumilus (strain SAFR-032).